The primary structure comprises 186 residues: ADP-ribosylation factor-like protein 8A (186 aa).

Positions 1 to 19 form an intramembrane region, note=Mediates targeting to membranes; it reads MLALFNKLLDWFKALFWKE. GTP is bound by residues 29 to 35, 71 to 75, and 130 to 133; these read QYSGKTT, DIGGQ, and NKRD.

It belongs to the small GTPase superfamily. Arf family.

The protein resides in the late endosome membrane. It is found in the lysosome membrane. Its function is as follows. May play a role in lysosomes motility. Alternatively, may play a role in chromosome segregation. The chain is ADP-ribosylation factor-like protein 8A (arl8a) from Xenopus tropicalis (Western clawed frog).